A 116-amino-acid chain; its full sequence is Nucleoid-associated protein P9215_00191 (116 aa).

The protein belongs to the YbaB/EbfC family. As to quaternary structure, homodimer.

It localises to the cytoplasm. The protein resides in the nucleoid. Binds to DNA and alters its conformation. May be involved in regulation of gene expression, nucleoid organization and DNA protection. The polypeptide is Nucleoid-associated protein P9215_00191 (Prochlorococcus marinus (strain MIT 9215)).